Reading from the N-terminus, the 87-residue chain is DNA-directed RNA polymerase subunit omega (87 aa).

It belongs to the RNA polymerase subunit omega family. The RNAP catalytic core consists of 2 alpha, 1 beta, 1 beta' and 1 omega subunit. When a sigma factor is associated with the core the holoenzyme is formed, which can initiate transcription.

The enzyme catalyses RNA(n) + a ribonucleoside 5'-triphosphate = RNA(n+1) + diphosphate. Promotes RNA polymerase assembly. Latches the N- and C-terminal regions of the beta' subunit thereby facilitating its interaction with the beta and alpha subunits. In Pseudomonas savastanoi pv. phaseolicola (strain 1448A / Race 6) (Pseudomonas syringae pv. phaseolicola (strain 1448A / Race 6)), this protein is DNA-directed RNA polymerase subunit omega.